The sequence spans 1024 residues: Nardilysin-like (1024 aa).

Residues 41 to 103 (PDIYPEGSVP…DEVKGKGDHQ (63 aa)) are disordered. Residues 52 to 95 (QIDEDDEDGEEEDSDGSSEDDDDDEDDEEDGEGDEEDEDEDEDE) are compositionally biased toward acidic residues. H129 serves as a coordination point for Zn(2+). The active-site Proton acceptor is the E132. Zn(2+) is bound at residue H133. The active site involves E203. E210 contacts Zn(2+).

The protein belongs to the peptidase M16 family. It depends on Zn(2+) as a cofactor.

The enzyme catalyses Hydrolysis of polypeptides, preferably at -Xaa-|-Arg-Lys-, and less commonly at -Arg-|-Arg-Xaa-, in which Xaa is not Arg or Lys.. Its function is as follows. Cleaves peptide substrates on the N-terminus of arginine residues in dibasic pairs. In Arabidopsis thaliana (Mouse-ear cress), this protein is Nardilysin-like.